We begin with the raw amino-acid sequence, 65 residues long: Alpha-conotoxin Mr1.1 (65 aa).

The signal sequence occupies residues 1 to 21 (MGMRMMFTVFLLVVLATTVVS). The propeptide occupies 22–48 (FTSDRASDGRKAAAKDKASDLVALTVK). 2 disulfides stabilise this stretch: cysteine 50–cysteine 56 and cysteine 51–cysteine 64. The tract at residues 52–54 (SHP) is ser-Xaa-Pro motif, crucial for potent interaction with nAChR. The residue at position 64 (cysteine 64) is a Cysteine amide.

This sequence belongs to the conotoxin A superfamily. As to expression, expressed by the venom duct.

The protein localises to the secreted. Its function is as follows. Alpha-conotoxins act on postsynaptic membranes, they bind to the nicotinic acetylcholine receptors (nAChR) and thus inhibit them. This toxin potently and reversibly inhibits alpha-9-alpha-10/CHRNA9-CHRNA10 (IC(50)=92 nM (human) and IC(50)=8.3 nM (rat)) and human alpha3-beta-2/CHRNA3-CHRNB2 nAChR (IC(50)=218.9 nM). Also moderately inhibits human alpha-3-beta-4/CHRNA3-CHRNB4 (60% inhibition at 1 uM), rat alpha-7/CHRNA7 (65% inhibition at 1 uM) and rat alpha-3-beta-2/CHRNA3-CHRNB2 nAChR (50-70% inhibition at 10 uM). In two rat pain models, this toxin shows analgesic effect. The protein is Alpha-conotoxin Mr1.1 of Conus marmoreus (Marble cone).